Reading from the N-terminus, the 1256-residue chain is Protein flightless-1 (1256 aa).

LRR repeat units follow at residues 4–28 (LPFV…MRQM), 29–51 (SRVQ…LGHL), 52–74 (QKLE…LTEL), 75–99 (SCLR…LFHL), 100–122 (EELT…LERA), 124–145 (NLIV…LFIH), 147–169 (TDLL…TRRL), 171–192 (NLKT…QLPS), 218–241 (LANL…VYNV), 243–264 (TLVR…VELW), 265–287 (QRLE…LCKL), 289–312 (KLRR…IGKL), 313–335 (GALE…LCRC), 336–358 (GALK…IHLL), and 360–381 (GLDQ…PSEA). A disordered region spans residues 405–476 (AAVPPSMPSS…ESLKPKRWDE (72 aa)). The span at 431–476 (PRSEGDQDAAKVLKGMKDVAKDKDNEAGAVPEDGKPESLKPKRWDE) shows a compositional bias: basic and acidic residues. Gelsolin-like repeat units follow at residues 512 to 589 (IEEV…EQFL), 633 to 703 (EPVA…AEFW), 749 to 822 (VELP…MQIF), and 1168 to 1242 (EKCA…SRRF).

This sequence belongs to the villin/gelsolin family. Found in ovaries, larval fat bodies, brain and adult thorax.

Its function is as follows. May play a key role in embryonic cellularization by interacting with both the cytoskeleton and other cellular components. Alternatively, it may play a structural role in indirect flight muscle. Vital for embryonic development. This chain is Protein flightless-1 (fliI), found in Drosophila melanogaster (Fruit fly).